Consider the following 472-residue polypeptide: Ribosomal protein uS12 methylthiotransferase RimO (472 aa).

The MTTase N-terminal domain maps to 33-143 (NRIGFVSLGC…VLKHVHKYVP (111 aa)). C42, C78, C107, C175, C179, and C182 together coordinate [4Fe-4S] cluster. Residues 161–398 (LTPKHYAYLK…MEVQAEISAE (238 aa)) form the Radical SAM core domain. In terms of domain architecture, TRAM spans 401 to 467 (ARFVGRTLDI…EHDLWAEVVD (67 aa)).

This sequence belongs to the methylthiotransferase family. RimO subfamily. The cofactor is [4Fe-4S] cluster.

It is found in the cytoplasm. It carries out the reaction L-aspartate(89)-[ribosomal protein uS12]-hydrogen + (sulfur carrier)-SH + AH2 + 2 S-adenosyl-L-methionine = 3-methylsulfanyl-L-aspartate(89)-[ribosomal protein uS12]-hydrogen + (sulfur carrier)-H + 5'-deoxyadenosine + L-methionine + A + S-adenosyl-L-homocysteine + 2 H(+). Functionally, catalyzes the methylthiolation of an aspartic acid residue of ribosomal protein uS12. This Shewanella baltica (strain OS195) protein is Ribosomal protein uS12 methylthiotransferase RimO.